The primary structure comprises 591 residues: Transcriptional regulator PUL4 (591 aa).

The segment at residues 3 to 29 (CLECKKRKQKCDGQKPCRRCTKLNVKC) is a DNA-binding region (zn(2)-C6 fungal-type).

It is found in the nucleus. Transcription factor involved in regulation of the PUL gene cluster that mediates the formation of pulcherrimin, a red iron-containing pigment composed of two cyclized and modified leucine molecules that acts as a siderophore, a chelator that binds iron outside the cell for subsequent uptake. The polypeptide is Transcriptional regulator PUL4 (Kluyveromyces lactis (strain ATCC 8585 / CBS 2359 / DSM 70799 / NBRC 1267 / NRRL Y-1140 / WM37) (Yeast)).